The chain runs to 256 residues: Thiazole synthase (256 aa).

The active-site Schiff-base intermediate with DXP is lysine 96. 1-deoxy-D-xylulose 5-phosphate contacts are provided by residues glycine 157, 184–185 (AG), and 206–207 (NT).

This sequence belongs to the ThiG family. In terms of assembly, homotetramer. Forms heterodimers with either ThiH or ThiS.

Its subcellular location is the cytoplasm. It catalyses the reaction [ThiS sulfur-carrier protein]-C-terminal-Gly-aminoethanethioate + 2-iminoacetate + 1-deoxy-D-xylulose 5-phosphate = [ThiS sulfur-carrier protein]-C-terminal Gly-Gly + 2-[(2R,5Z)-2-carboxy-4-methylthiazol-5(2H)-ylidene]ethyl phosphate + 2 H2O + H(+). The protein operates within cofactor biosynthesis; thiamine diphosphate biosynthesis. Catalyzes the rearrangement of 1-deoxy-D-xylulose 5-phosphate (DXP) to produce the thiazole phosphate moiety of thiamine. Sulfur is provided by the thiocarboxylate moiety of the carrier protein ThiS. In vitro, sulfur can be provided by H(2)S. The polypeptide is Thiazole synthase (Brucella melitensis biotype 2 (strain ATCC 23457)).